The sequence spans 87 residues: U3-theraphotoxin-Cg1b (87 aa).

An N-terminal signal peptide occupies residues 1 to 23 (MRTFTLIAILTCAVLVIFHVSAA). Positions 24-48 (EELEAQDVIQPEDIFTGVATLEEDR) are excised as a propeptide. 3 cysteine pairs are disulfide-bonded: cysteine 52-cysteine 65, cysteine 56-cysteine 79, and cysteine 73-cysteine 84.

The protein belongs to the neurotoxin 12 (Hwtx-2) family. 03 (juruin) subfamily. As to expression, expressed by the venom gland.

It localises to the secreted. Probable ion channel inhibitor. The polypeptide is U3-theraphotoxin-Cg1b (Chilobrachys guangxiensis (Chinese earth tiger tarantula)).